Consider the following 146-residue polypeptide: Hemoglobin subunit beta-2 (146 aa).

The 145-residue stretch at 2-146 (EWTDFERATI…VVSSLGRQYH (145 aa)) folds into the Globin domain. Heme b-binding residues include H63 and H92.

Belongs to the globin family. As to quaternary structure, hb2 is a heterotetramer of two alpha chains and two beta-2 chains. In terms of tissue distribution, red blood cells.

In terms of biological role, involved in oxygen transport from gills to the various peripheral tissues. The chain is Hemoglobin subunit beta-2 (hbb2) from Pseudaphritis urvillii (Congolli).